We begin with the raw amino-acid sequence, 186 residues long: Elongation factor P (186 aa).

N6-(3,6-diaminohexanoyl)-5-hydroxylysine is present on K33.

Belongs to the elongation factor P family. May be beta-lysylated on the epsilon-amino group of Lys-33 by the combined action of EpmA and EpmB, and then hydroxylated on the C5 position of the same residue by EpmC (if this protein is present). Lysylation is critical for the stimulatory effect of EF-P on peptide-bond formation. The lysylation moiety may extend toward the peptidyltransferase center and stabilize the terminal 3-CCA end of the tRNA. Hydroxylation of the C5 position on Lys-33 may allow additional potential stabilizing hydrogen-bond interactions with the P-tRNA.

The protein resides in the cytoplasm. It participates in protein biosynthesis; polypeptide chain elongation. Its function is as follows. Involved in peptide bond synthesis. Alleviates ribosome stalling that occurs when 3 or more consecutive Pro residues or the sequence PPG is present in a protein, possibly by augmenting the peptidyl transferase activity of the ribosome. Modification of Lys-33 is required for alleviation. In Acidithiobacillus ferrooxidans (strain ATCC 23270 / DSM 14882 / CIP 104768 / NCIMB 8455) (Ferrobacillus ferrooxidans (strain ATCC 23270)), this protein is Elongation factor P.